A 294-amino-acid chain; its full sequence is 4-hydroxybenzoate octaprenyltransferase (294 aa).

The next 8 membrane-spanning stretches (helical) occupy residues Ile24–Phe44, Leu47–Ile67, Leu99–Val119, Phe139–Phe159, Gly164–Tyr184, Val213–Ala233, Pro238–Ile258, and Asn274–Ala294.

This sequence belongs to the UbiA prenyltransferase family. The cofactor is Mg(2+).

The protein localises to the cell inner membrane. It carries out the reaction all-trans-octaprenyl diphosphate + 4-hydroxybenzoate = 4-hydroxy-3-(all-trans-octaprenyl)benzoate + diphosphate. It functions in the pathway cofactor biosynthesis; ubiquinone biosynthesis. Its function is as follows. Catalyzes the prenylation of para-hydroxybenzoate (PHB) with an all-trans polyprenyl group. Mediates the second step in the final reaction sequence of ubiquinone-8 (UQ-8) biosynthesis, which is the condensation of the polyisoprenoid side chain with PHB, generating the first membrane-bound Q intermediate 3-octaprenyl-4-hydroxybenzoate. The sequence is that of 4-hydroxybenzoate octaprenyltransferase from Aromatoleum aromaticum (strain DSM 19018 / LMG 30748 / EbN1) (Azoarcus sp. (strain EbN1)).